The primary structure comprises 156 residues: Small ribosomal subunit protein bS16 (156 aa).

Low complexity-rich tracts occupy residues 113–123 (AESGTTAAATT) and 137–156 (EAPA…ASES). A disordered region spans residues 113–156 (AESGTTAAATTPKKKKAPKKDEAAEAPAEAAEAPAEAADAASES).

It belongs to the bacterial ribosomal protein bS16 family.

The protein is Small ribosomal subunit protein bS16 of Mycolicibacterium smegmatis (strain ATCC 700084 / mc(2)155) (Mycobacterium smegmatis).